The chain runs to 159 residues: Heavy metal-associated isoprenylated plant protein 28 (159 aa).

The region spanning 10 to 73 (LQTIEMRVHM…KVRKTGRRAE (64 aa)) is the HMA domain. Residues C21 and C24 each coordinate a metal cation. At C156 the chain carries Cysteine methyl ester. C156 is lipidated: S-farnesyl cysteine. The propeptide at 157-159 (SIM) is removed in mature form.

The protein belongs to the HIPP family.

In terms of biological role, heavy-metal-binding protein. In Arabidopsis thaliana (Mouse-ear cress), this protein is Heavy metal-associated isoprenylated plant protein 28.